The following is a 336-amino-acid chain: Glyceraldehyde-3-phosphate dehydrogenase (336 aa).

NAD(+) is bound by residues 12–13 (RI), D34, R78, and S120. D-glyceraldehyde 3-phosphate contacts are provided by residues 151 to 153 (SCT) and T182. C152 acts as the Nucleophile in catalysis. N183 lines the NAD(+) pocket. D-glyceraldehyde 3-phosphate-binding positions include 211–212 (NG) and R234. N316 lines the NAD(+) pocket.

This sequence belongs to the glyceraldehyde-3-phosphate dehydrogenase family. Homotetramer.

The protein localises to the cytoplasm. The catalysed reaction is D-glyceraldehyde 3-phosphate + phosphate + NAD(+) = (2R)-3-phospho-glyceroyl phosphate + NADH + H(+). It participates in carbohydrate degradation; glycolysis; pyruvate from D-glyceraldehyde 3-phosphate: step 1/5. In terms of biological role, catalyzes the oxidative phosphorylation of glyceraldehyde 3-phosphate (G3P) to 1,3-bisphosphoglycerate (BPG) using the cofactor NAD. The first reaction step involves the formation of a hemiacetal intermediate between G3P and a cysteine residue, and this hemiacetal intermediate is then oxidized to a thioester, with concomitant reduction of NAD to NADH. The reduced NADH is then exchanged with the second NAD, and the thioester is attacked by a nucleophilic inorganic phosphate to produce BPG. In Heyndrickxia coagulans (Weizmannia coagulans), this protein is Glyceraldehyde-3-phosphate dehydrogenase (gap).